The chain runs to 256 residues: Imidazole glycerol phosphate synthase subunit HisF (256 aa).

Residues D11 and D130 contribute to the active site.

This sequence belongs to the HisA/HisF family. Heterodimer of HisH and HisF.

Its subcellular location is the cytoplasm. The catalysed reaction is 5-[(5-phospho-1-deoxy-D-ribulos-1-ylimino)methylamino]-1-(5-phospho-beta-D-ribosyl)imidazole-4-carboxamide + L-glutamine = D-erythro-1-(imidazol-4-yl)glycerol 3-phosphate + 5-amino-1-(5-phospho-beta-D-ribosyl)imidazole-4-carboxamide + L-glutamate + H(+). It participates in amino-acid biosynthesis; L-histidine biosynthesis; L-histidine from 5-phospho-alpha-D-ribose 1-diphosphate: step 5/9. Its function is as follows. IGPS catalyzes the conversion of PRFAR and glutamine to IGP, AICAR and glutamate. The HisF subunit catalyzes the cyclization activity that produces IGP and AICAR from PRFAR using the ammonia provided by the HisH subunit. The protein is Imidazole glycerol phosphate synthase subunit HisF of Synechococcus sp. (strain CC9605).